We begin with the raw amino-acid sequence, 344 residues long: Serine/threonine-protein kinase ppk13 (344 aa).

ATP contacts are provided by residues 38–46 (LGEGGFAFV) and K61. Residues 76 to 344 (MKEADYHRKF…LSKIDLQINQ (269 aa)) form the Protein kinase domain. Catalysis depends on H192, which acts as the Proton acceptor.

This sequence belongs to the protein kinase superfamily. Ser/Thr protein kinase family.

The protein localises to the endoplasmic reticulum. The protein resides in the golgi apparatus. It carries out the reaction L-seryl-[protein] + ATP = O-phospho-L-seryl-[protein] + ADP + H(+). The catalysed reaction is L-threonyl-[protein] + ATP = O-phospho-L-threonyl-[protein] + ADP + H(+). The protein is Serine/threonine-protein kinase ppk13 (ppk13) of Schizosaccharomyces pombe (strain 972 / ATCC 24843) (Fission yeast).